The primary structure comprises 192 residues: Virion infectivity factor (192 aa).

The tract at residues 14-17 (DRMR) is interaction with host APOBEC3F; F1-box. Positions 40-44 (YRHHF) are interaction with host APOBEC3G; G-box. The interval 54–72 (EVHIPLETAELVITTYWGL) is interaction with host APOBEC3F and APOBEC3G; FG-box. The segment at 74-79 (PGEREW) is interaction with host APOBEC3F; F2-box. The interval 75 to 114 (GEREWHLGQGVSIEWRQGRYRTQIDPGLADQLIHIYYFDC) is RNA-binding. The residue at position 96 (threonine 96) is a Phosphothreonine; by host MAP4K1. Positions 108, 114, 133, and 139 each coordinate Zn(2+). The short motif at 108–139 (HIYYFDCFSESAIRKAILGHKISPRCNYQAGH) is the HCCH motif element. A Phosphoserine; by host modification is found at serine 144. The BC-box-like motif signature appears at 144 to 153 (SLQYLALTAL). Residues 151-164 (TALIAPKKTKPPLP) are multimerization. The tract at residues 151-180 (TALIAPKKTKPPLPSVQKLVEDRWNKPQKT) is SOCS box-like. Positions 164–192 (PSVQKLVEDRWNKPQKTRGHRESHTMNGH) are disordered. Serine 165 carries the phosphoserine; by host MAP4K1 modification. The segment at 171-172 (ED) is membrane association. The segment covering 183–192 (HRESHTMNGH) has biased composition (basic and acidic residues). The residue at position 188 (threonine 188) is a Phosphothreonine; by host.

Belongs to the primate lentivirus group Vif protein family. In terms of assembly, homomultimer; in vitro and presumably in vivo. Interacts with viral RNA and Pr55Gag precursor; these interactions mediate Vif incorporation into the virion. Interacts with the viral reverse transcriptase. Forms cullin-5-RING E3 ubiquitin-protein ligase complex (ECS complex) by interacting with host CUL5, RBX2, elongin BC complex (ELOB and ELOC) and CBFB/CBF-beta. Within the ECS complex, Vif interacts directly with host CUL5, ELOC and APOBEC (APOBEC3F and APOBEC3G) substrates. The ECS complex also contains some single-stranded RNA (ssRNA) that acts as a glue that bridges Vif with APOBEC (APOBEC3F and APOBEC3G) substrates. Interacts with host UBCE7IP1 isoform 3/ZIN and possibly with SAT. Interacts with host tyrosine kinases HCK and FYN; these interactions may decrease level of phosphorylated APOBEC3G incorporation into virions. Interacts with host ABCE1; this interaction may play a role in protecting viral RNA from damage during viral assembly. Interacts with host MDM2; this interaction targets Vif for degradation by the proteasome. Processed in virion by the viral protease. In terms of processing, highly phosphorylated on serine and threonine residues. Post-translationally, polyubiquitinated and degraded by the proteasome in the presence of APOBEC3G.

The protein resides in the host cytoplasm. The protein localises to the host cell membrane. Its subcellular location is the virion. Functionally, counteracts the innate antiviral activity of host APOBEC3F and APOBEC3G by promoting their ubiquitination and degradation. Acts as a substrate recognition component of an E3 ubiquitin-protein ligase complex: mechanistically, Vif hijacks a host cullin-5-RING E3 ubiquitin-protein ligase complex (ECS complex) and the transcription coactivator CBFB/CBF-beta to form an active E3 ubiquitin-protein ligase complex that targets APOBEC3G and APOBEC3F for polyubiquitination, leading to their degradation by the proteasome. Vif interaction with APOBEC3G also blocks its cytidine deaminase activity in a proteasome-independent manner, suggesting a dual inhibitory mechanism. May interact directly with APOBEC3G mRNA in order to inhibit its translation. Association with CBFB/CBF-beta also inhibits the transcription coactivator activity of CBFB/CBF-beta. Seems to play a role in viral morphology by affecting the stability of the viral nucleoprotein core. Finally, Vif also contributes to the G2 cell cycle arrest observed in HIV infected cells. This Homo sapiens (Human) protein is Virion infectivity factor.